Reading from the N-terminus, the 273-residue chain is 4-hydroxy-tetrahydrodipicolinate reductase (273 aa).

NAD(+)-binding positions include 11–16 and 106–108; these read GATGKM and GTT. The active-site Proton donor/acceptor is the histidine 162. Histidine 163 contacts (S)-2,3,4,5-tetrahydrodipicolinate. The active-site Proton donor is the lysine 166. Position 172–173 (172–173) interacts with (S)-2,3,4,5-tetrahydrodipicolinate; it reads GT.

The protein belongs to the DapB family.

The protein resides in the cytoplasm. The enzyme catalyses (S)-2,3,4,5-tetrahydrodipicolinate + NAD(+) + H2O = (2S,4S)-4-hydroxy-2,3,4,5-tetrahydrodipicolinate + NADH + H(+). It carries out the reaction (S)-2,3,4,5-tetrahydrodipicolinate + NADP(+) + H2O = (2S,4S)-4-hydroxy-2,3,4,5-tetrahydrodipicolinate + NADPH + H(+). It participates in amino-acid biosynthesis; L-lysine biosynthesis via DAP pathway; (S)-tetrahydrodipicolinate from L-aspartate: step 4/4. Its function is as follows. Catalyzes the conversion of 4-hydroxy-tetrahydrodipicolinate (HTPA) to tetrahydrodipicolinate. In Synechococcus sp. (strain ATCC 27144 / PCC 6301 / SAUG 1402/1) (Anacystis nidulans), this protein is 4-hydroxy-tetrahydrodipicolinate reductase.